The primary structure comprises 105 residues: MTTTHIDQVSVSTQASVYFDGKCISHGVTLADGTKKSVGVILPATLTFNTGAPEVMECVAGSCDYKLPGSEVWLKSKPGDKFSIPGNTPFDIRVTEPYHYICHFG.

The protein belongs to the nucleoside phosphorylase PpnP family.

The enzyme catalyses a purine D-ribonucleoside + phosphate = a purine nucleobase + alpha-D-ribose 1-phosphate. It carries out the reaction adenosine + phosphate = alpha-D-ribose 1-phosphate + adenine. It catalyses the reaction cytidine + phosphate = cytosine + alpha-D-ribose 1-phosphate. The catalysed reaction is guanosine + phosphate = alpha-D-ribose 1-phosphate + guanine. The enzyme catalyses inosine + phosphate = alpha-D-ribose 1-phosphate + hypoxanthine. It carries out the reaction thymidine + phosphate = 2-deoxy-alpha-D-ribose 1-phosphate + thymine. It catalyses the reaction uridine + phosphate = alpha-D-ribose 1-phosphate + uracil. The catalysed reaction is xanthosine + phosphate = alpha-D-ribose 1-phosphate + xanthine. Catalyzes the phosphorolysis of diverse nucleosides, yielding D-ribose 1-phosphate and the respective free bases. Can use uridine, adenosine, guanosine, cytidine, thymidine, inosine and xanthosine as substrates. Also catalyzes the reverse reactions. This is Pyrimidine/purine nucleoside phosphorylase from Albidiferax ferrireducens (strain ATCC BAA-621 / DSM 15236 / T118) (Rhodoferax ferrireducens).